The chain runs to 856 residues: Translation initiation factor IF-2 (856 aa).

Disordered regions lie at residues 1–248 (MSDN…ARAR) and 254–273 (KRAR…QQKQ). Residues 22–38 (ETGQVKQSFSHGRSNTV) are compositionally biased toward polar residues. Pro residues predominate over residues 83-93 (APRPAPAPIPT). Residues 100–150 (LERREQQERLLREAEEARMAALEETRRREERAKAEATEEERRRAEENRRAE) are compositionally biased toward basic and acidic residues. A compositionally biased stretch (low complexity) spans 156 to 196 (AAAAAAAAATAEAETAAAAPREEAPAAAGTAEEAPRTSSST). The segment covering 197–209 (MPPPRRFTPVPSP) has biased composition (pro residues). Over residues 210-229 (KRPEPPRPQQRDRKGDDRRQ) the composition is skewed to basic and acidic residues. Residues 356–526 (PRPPVVTIMG…ELQAELLELK (171 aa)) form the tr-type G domain. The tract at residues 365 to 372 (GHVDHGKT) is G1. 365–372 (GHVDHGKT) contributes to the GTP binding site. The interval 390–394 (GITQH) is G2. The G3 stretch occupies residues 412-415 (DTPG). GTP is bound by residues 412 to 416 (DTPGH) and 466 to 469 (NKMD). The tract at residues 466-469 (NKMD) is G4. The G5 stretch occupies residues 502-504 (SAL).

Belongs to the TRAFAC class translation factor GTPase superfamily. Classic translation factor GTPase family. IF-2 subfamily.

Its subcellular location is the cytoplasm. Functionally, one of the essential components for the initiation of protein synthesis. Protects formylmethionyl-tRNA from spontaneous hydrolysis and promotes its binding to the 30S ribosomal subunits. Also involved in the hydrolysis of GTP during the formation of the 70S ribosomal complex. The chain is Translation initiation factor IF-2 from Rhizorhabdus wittichii (strain DSM 6014 / CCUG 31198 / JCM 15750 / NBRC 105917 / EY 4224 / RW1) (Sphingomonas wittichii).